The chain runs to 233 residues: Leucyl/phenylalanyl-tRNA--protein transferase (233 aa).

This sequence belongs to the L/F-transferase family.

Its subcellular location is the cytoplasm. The catalysed reaction is N-terminal L-lysyl-[protein] + L-leucyl-tRNA(Leu) = N-terminal L-leucyl-L-lysyl-[protein] + tRNA(Leu) + H(+). It carries out the reaction N-terminal L-arginyl-[protein] + L-leucyl-tRNA(Leu) = N-terminal L-leucyl-L-arginyl-[protein] + tRNA(Leu) + H(+). The enzyme catalyses L-phenylalanyl-tRNA(Phe) + an N-terminal L-alpha-aminoacyl-[protein] = an N-terminal L-phenylalanyl-L-alpha-aminoacyl-[protein] + tRNA(Phe). Functions in the N-end rule pathway of protein degradation where it conjugates Leu, Phe and, less efficiently, Met from aminoacyl-tRNAs to the N-termini of proteins containing an N-terminal arginine or lysine. In Anaeromyxobacter dehalogenans (strain 2CP-1 / ATCC BAA-258), this protein is Leucyl/phenylalanyl-tRNA--protein transferase.